Consider the following 798-residue polypeptide: Penicillin-binding protein 1A (798 aa).

Topologically, residues 1-9 (MIKKILTTC) are cytoplasmic. Residues 10 to 30 (FGLVFGFCVFGVGLVAIAILV) form a helical; Signal-anchor for type II membrane protein membrane-spanning segment. Topologically, residues 31-798 (TYPKLPSLDS…SKQQQLDSLF (768 aa)) are periplasmic. Residues 50–218 (LTIYSADGEV…SAYNPIVNPE (169 aa)) form a transglycosylase region. The active-site Proton donor; for transglycosylase activity is Glu-88. The interval 378 to 700 (RRALGFAARA…GTIAVPVWVD (323 aa)) is transpeptidase. Residue Ser-461 is the Acyl-ester intermediate; for transpeptidase activity of the active site. Residues 738–798 (GLTLDNSGIA…SKQQQLDSLF (61 aa)) are disordered. Basic and acidic residues predominate over residues 768–777 (AADDEVRQDM). Positions 783 to 798 (LPSNTGSKQQQLDSLF) are enriched in polar residues.

In the N-terminal section; belongs to the glycosyltransferase 51 family. The protein in the C-terminal section; belongs to the transpeptidase family.

The protein localises to the cell inner membrane. It catalyses the reaction [GlcNAc-(1-&gt;4)-Mur2Ac(oyl-L-Ala-gamma-D-Glu-L-Lys-D-Ala-D-Ala)](n)-di-trans,octa-cis-undecaprenyl diphosphate + beta-D-GlcNAc-(1-&gt;4)-Mur2Ac(oyl-L-Ala-gamma-D-Glu-L-Lys-D-Ala-D-Ala)-di-trans,octa-cis-undecaprenyl diphosphate = [GlcNAc-(1-&gt;4)-Mur2Ac(oyl-L-Ala-gamma-D-Glu-L-Lys-D-Ala-D-Ala)](n+1)-di-trans,octa-cis-undecaprenyl diphosphate + di-trans,octa-cis-undecaprenyl diphosphate + H(+). It carries out the reaction Preferential cleavage: (Ac)2-L-Lys-D-Ala-|-D-Ala. Also transpeptidation of peptidyl-alanyl moieties that are N-acyl substituents of D-alanine.. It participates in cell wall biogenesis; peptidoglycan biosynthesis. Its function is as follows. Cell wall formation. Synthesis of cross-linked peptidoglycan from the lipid intermediates. The enzyme has a penicillin-insensitive transglycosylase N-terminal domain (formation of linear glycan strands) and a penicillin-sensitive transpeptidase C-terminal domain (cross-linking of the peptide subunits). This chain is Penicillin-binding protein 1A (mrcA), found in Neisseria meningitidis serogroup A / serotype 4A (strain DSM 15465 / Z2491).